The following is a 242-amino-acid chain: Protein odd-skipped-related 1 (242 aa).

3 consecutive C2H2-type zinc fingers follow at residues 128-150 (FICKYCARHFTKSYNLMIHERTH), 156-178 (FHCETCGKSFRRQDHLRDHKYIH), and 184-207 (HKCEICGKGFCQLRTLNVHRSCHH).

This sequence belongs to the Odd C2H2-type zinc-finger protein family.

The protein localises to the nucleus. In terms of biological role, may function as transcription regulator. Essential for larval development. Required for morphogenesis and function of the digestive tract. The protein is Protein odd-skipped-related 1 of Caenorhabditis elegans.